A 277-amino-acid chain; its full sequence is Small ribosomal subunit protein uS2 (277 aa).

Over residues 228-241 (YEERLQAETDKDAE) the composition is skewed to basic and acidic residues. Residues 228–277 (YEERLQAETDKDAESSTVQQEENPEADIPESIETKESVSAAADSDLDENE) form a disordered region.

It belongs to the universal ribosomal protein uS2 family.

The sequence is that of Small ribosomal subunit protein uS2 from Syntrophus aciditrophicus (strain SB).